Reading from the N-terminus, the 500-residue chain is Lysine--tRNA ligase (500 aa).

2 residues coordinate Mg(2+): glutamate 410 and glutamate 417.

This sequence belongs to the class-II aminoacyl-tRNA synthetase family. In terms of assembly, homodimer. The cofactor is Mg(2+).

It localises to the cytoplasm. The enzyme catalyses tRNA(Lys) + L-lysine + ATP = L-lysyl-tRNA(Lys) + AMP + diphosphate. The chain is Lysine--tRNA ligase from Mycoplasma mycoides subsp. mycoides SC (strain CCUG 32753 / NCTC 10114 / PG1).